A 1465-amino-acid polypeptide reads, in one-letter code: DNA polymerase III PolC-type (1465 aa).

In terms of domain architecture, Exonuclease spans 427–583 (YVVFDVETTG…YDAEATGRLL (157 aa)).

It belongs to the DNA polymerase type-C family. PolC subfamily.

It localises to the cytoplasm. The catalysed reaction is DNA(n) + a 2'-deoxyribonucleoside 5'-triphosphate = DNA(n+1) + diphosphate. In terms of biological role, required for replicative DNA synthesis. This DNA polymerase also exhibits 3' to 5' exonuclease activity. The chain is DNA polymerase III PolC-type from Streptococcus pyogenes serotype M5 (strain Manfredo).